The following is a 304-amino-acid chain: Developmental pluripotency-associated protein 4 (304 aa).

The span at 1–11 (MLRGSASSTSM) shows a compositional bias: polar residues. 2 disordered regions span residues 1–84 (MLRG…IPPL) and 147–176 (KKLK…VGEP). Over residues 12–29 (EKAKGKEWTSTEKSREED) the composition is skewed to basic and acidic residues. Phosphothreonine is present on threonine 215. Phosphoserine occurs at positions 221 and 226.

In terms of assembly, interacts with DPPA2. Interacts with PCGF1.

Its subcellular location is the nucleus. Its function is as follows. May be involved in the maintenance of active epigenetic status of target genes. May inhibit differentiation of embryonic cells into a primitive ectoderm lineage. This chain is Developmental pluripotency-associated protein 4 (DPPA4), found in Homo sapiens (Human).